The chain runs to 166 residues: 6,7-dimethyl-8-ribityllumazine synthase (166 aa).

Residues tryptophan 31, serine 63 to glutamate 65, and valine 85 to isoleucine 87 contribute to the 5-amino-6-(D-ribitylamino)uracil site. Glycine 90–threonine 91 contributes to the (2S)-2-hydroxy-3-oxobutyl phosphate binding site. The active-site Proton donor is histidine 93. Position 118 (phenylalanine 118) interacts with 5-amino-6-(D-ribitylamino)uracil. A (2S)-2-hydroxy-3-oxobutyl phosphate-binding site is contributed by arginine 132.

It belongs to the DMRL synthase family.

The catalysed reaction is (2S)-2-hydroxy-3-oxobutyl phosphate + 5-amino-6-(D-ribitylamino)uracil = 6,7-dimethyl-8-(1-D-ribityl)lumazine + phosphate + 2 H2O + H(+). Its pathway is cofactor biosynthesis; riboflavin biosynthesis; riboflavin from 2-hydroxy-3-oxobutyl phosphate and 5-amino-6-(D-ribitylamino)uracil: step 1/2. Its function is as follows. Catalyzes the formation of 6,7-dimethyl-8-ribityllumazine by condensation of 5-amino-6-(D-ribitylamino)uracil with 3,4-dihydroxy-2-butanone 4-phosphate. This is the penultimate step in the biosynthesis of riboflavin. This Cutibacterium acnes (strain DSM 16379 / KPA171202) (Propionibacterium acnes) protein is 6,7-dimethyl-8-ribityllumazine synthase.